The primary structure comprises 261 residues: Cytochrome c oxidase subunit 3 (261 aa).

Over 1-15 (MTHQTHAYHMVNPSP) the chain is Mitochondrial matrix. The helical transmembrane segment at 16–34 (WPLTGALSALLMTSGLAMW) threads the bilayer. At 35–40 (FHFNSV) the chain is on the mitochondrial intermembrane side. The helical transmembrane segment at 41–66 (TLLTLGLTTNMLTMYQWWRDIIREST) threads the bilayer. Over 67 to 72 (FQGHHT) the chain is Mitochondrial matrix. Residues 73–105 (PTVQKGLRYGMILFIISEVLFFTGFFWAFYHSS) traverse the membrane as a helical segment. The Mitochondrial intermembrane portion of the chain corresponds to 106–128 (LAPTPELGGCWPPTGISPLNPLE). Residues 129 to 152 (VPLLNTSVLLASGVSITWAHHSLM) traverse the membrane as a helical segment. At 153–155 (EGN) the chain is on the mitochondrial matrix side. A helical transmembrane segment spans residues 156 to 183 (RNHMLQALFITIALGVYFTLLQASEYYE). Residues 184–190 (APFTISD) are Mitochondrial intermembrane-facing. The helical transmembrane segment at 191 to 223 (GIYGSTFFVATGFHGLHVIIGSTFLIVCFFRQL) threads the bilayer. Residues 224–232 (KFHFTSNHH) are Mitochondrial matrix-facing. Residues 233-256 (FGFEAAAWYWHFVDVVWLFLYVSI) form a helical membrane-spanning segment. Residues 257–261 (YWWGS) are Mitochondrial intermembrane-facing.

The protein belongs to the cytochrome c oxidase subunit 3 family. As to quaternary structure, component of the cytochrome c oxidase (complex IV, CIV), a multisubunit enzyme composed of 14 subunits. The complex is composed of a catalytic core of 3 subunits MT-CO1, MT-CO2 and MT-CO3, encoded in the mitochondrial DNA, and 11 supernumerary subunits COX4I, COX5A, COX5B, COX6A, COX6B, COX6C, COX7A, COX7B, COX7C, COX8 and NDUFA4, which are encoded in the nuclear genome. The complex exists as a monomer or a dimer and forms supercomplexes (SCs) in the inner mitochondrial membrane with NADH-ubiquinone oxidoreductase (complex I, CI) and ubiquinol-cytochrome c oxidoreductase (cytochrome b-c1 complex, complex III, CIII), resulting in different assemblies (supercomplex SCI(1)III(2)IV(1) and megacomplex MCI(2)III(2)IV(2)).

The protein resides in the mitochondrion inner membrane. It carries out the reaction 4 Fe(II)-[cytochrome c] + O2 + 8 H(+)(in) = 4 Fe(III)-[cytochrome c] + 2 H2O + 4 H(+)(out). In terms of biological role, component of the cytochrome c oxidase, the last enzyme in the mitochondrial electron transport chain which drives oxidative phosphorylation. The respiratory chain contains 3 multisubunit complexes succinate dehydrogenase (complex II, CII), ubiquinol-cytochrome c oxidoreductase (cytochrome b-c1 complex, complex III, CIII) and cytochrome c oxidase (complex IV, CIV), that cooperate to transfer electrons derived from NADH and succinate to molecular oxygen, creating an electrochemical gradient over the inner membrane that drives transmembrane transport and the ATP synthase. Cytochrome c oxidase is the component of the respiratory chain that catalyzes the reduction of oxygen to water. Electrons originating from reduced cytochrome c in the intermembrane space (IMS) are transferred via the dinuclear copper A center (CU(A)) of subunit 2 and heme A of subunit 1 to the active site in subunit 1, a binuclear center (BNC) formed by heme A3 and copper B (CU(B)). The BNC reduces molecular oxygen to 2 water molecules using 4 electrons from cytochrome c in the IMS and 4 protons from the mitochondrial matrix. The polypeptide is Cytochrome c oxidase subunit 3 (MT-CO3) (Neotragus moschatus (Suni)).